Here is a 425-residue protein sequence, read N- to C-terminus: Serine--tRNA ligase (425 aa).

Threonine 233–glutamate 235 contacts L-serine. Residue arginine 264–glutamate 266 coordinates ATP. L-serine is bound at residue glutamate 287. Glutamate 351–serine 354 provides a ligand contact to ATP. Serine 387 lines the L-serine pocket.

This sequence belongs to the class-II aminoacyl-tRNA synthetase family. Type-1 seryl-tRNA synthetase subfamily. As to quaternary structure, homodimer. The tRNA molecule binds across the dimer.

It localises to the cytoplasm. The catalysed reaction is tRNA(Ser) + L-serine + ATP = L-seryl-tRNA(Ser) + AMP + diphosphate + H(+). The enzyme catalyses tRNA(Sec) + L-serine + ATP = L-seryl-tRNA(Sec) + AMP + diphosphate + H(+). It functions in the pathway aminoacyl-tRNA biosynthesis; selenocysteinyl-tRNA(Sec) biosynthesis; L-seryl-tRNA(Sec) from L-serine and tRNA(Sec): step 1/1. Catalyzes the attachment of serine to tRNA(Ser). Is also able to aminoacylate tRNA(Sec) with serine, to form the misacylated tRNA L-seryl-tRNA(Sec), which will be further converted into selenocysteinyl-tRNA(Sec). This chain is Serine--tRNA ligase, found in Clostridium perfringens (strain ATCC 13124 / DSM 756 / JCM 1290 / NCIMB 6125 / NCTC 8237 / Type A).